Consider the following 336-residue polypeptide: Tyrosine recombinase XerC (336 aa).

The 93-residue stretch at 14-106 (VANCRWLGEF…SVKSFYRFLL (93 aa)) folds into the Core-binding (CB) domain. A Tyr recombinase domain is found at 127-330 (KIPDFLSEEE…TFNRLRDAYT (204 aa)). Catalysis depends on residues arginine 183, lysine 207, histidine 282, arginine 285, and histidine 308. Tyrosine 317 serves as the catalytic O-(3'-phospho-DNA)-tyrosine intermediate.

It belongs to the 'phage' integrase family. XerC subfamily. As to quaternary structure, forms a cyclic heterotetrameric complex composed of two molecules of XerC and two molecules of XerD.

The protein resides in the cytoplasm. Functionally, site-specific tyrosine recombinase, which acts by catalyzing the cutting and rejoining of the recombining DNA molecules. The XerC-XerD complex is essential to convert dimers of the bacterial chromosome into monomers to permit their segregation at cell division. It also contributes to the segregational stability of plasmids. The polypeptide is Tyrosine recombinase XerC (Chlorobaculum tepidum (strain ATCC 49652 / DSM 12025 / NBRC 103806 / TLS) (Chlorobium tepidum)).